Here is a 1615-residue protein sequence, read N- to C-terminus: DNA-directed RNA polymerase I subunit rpa1 (1615 aa).

Residues Cys65, Cys68, Cys75, and His78 each contribute to the Zn(2+) site. The disordered stretch occupies residues 155–181 (GKSNEEGEEVMESDESDSDKMDTDENK). A compositionally biased stretch (acidic residues) spans 160 to 171 (EGEEVMESDESD). Positions 172 to 181 (SDKMDTDENK) are enriched in basic and acidic residues. Mg(2+) contacts are provided by Asp593, Asp595, and Asp597. The bridging helix stretch occupies residues 955-967 (PQDYFFHCMAGRE). The span at 1305–1316 (DSLTINDDDAPA) shows a compositional bias: acidic residues. The interval 1305–1411 (DSLTINDDDA…NSRSSNSFSD (107 aa)) is disordered. Positions 1317–1336 (NDDTTNNDENTSQQQPSSQN) are enriched in low complexity. Acidic residues predominate over residues 1366 to 1399 (EDGEEEAEEKDSDEGESEAEESDDKSDVDSDSDE). Residues 1400 to 1411 (ISNSRSSNSFSD) are compositionally biased toward low complexity.

This sequence belongs to the RNA polymerase beta' chain family. As to quaternary structure, component of the RNA polymerase I (Pol I) complex consisting of at least 13 subunits.

The protein resides in the nucleus. The catalysed reaction is RNA(n) + a ribonucleoside 5'-triphosphate = RNA(n+1) + diphosphate. DNA-dependent RNA polymerase catalyzes the transcription of DNA into RNA using the four ribonucleoside triphosphates as substrates. Largest and catalytic core component of RNA polymerase I which synthesizes ribosomal RNA precursors. Forms the polymerase active center together with the second largest subunit. A single stranded DNA template strand of the promoter is positioned within the central active site cleft of Pol I. A bridging helix emanates from RPA1 and crosses the cleft near the catalytic site and is thought to promote translocation of Pol I by acting as a ratchet that moves the RNA-DNA hybrid through the active site by switching from straight to bent conformations at each step of nucleotide addition. In Dictyostelium discoideum (Social amoeba), this protein is DNA-directed RNA polymerase I subunit rpa1 (polr1a).